Consider the following 187-residue polypeptide: Elongation factor P (187 aa).

The protein belongs to the elongation factor P family.

The protein localises to the cytoplasm. Its pathway is protein biosynthesis; polypeptide chain elongation. Involved in peptide bond synthesis. Stimulates efficient translation and peptide-bond synthesis on native or reconstituted 70S ribosomes in vitro. Probably functions indirectly by altering the affinity of the ribosome for aminoacyl-tRNA, thus increasing their reactivity as acceptors for peptidyl transferase. The polypeptide is Elongation factor P (Synechococcus sp. (strain CC9605)).